Here is a 296-residue protein sequence, read N- to C-terminus: Bifunctional protein FolD (296 aa).

NADP(+)-binding positions include 169 to 171 (GRG), Thr-196, and Val-237.

Belongs to the tetrahydrofolate dehydrogenase/cyclohydrolase family. Homodimer.

It catalyses the reaction (6R)-5,10-methylene-5,6,7,8-tetrahydrofolate + NADP(+) = (6R)-5,10-methenyltetrahydrofolate + NADPH. The enzyme catalyses (6R)-5,10-methenyltetrahydrofolate + H2O = (6R)-10-formyltetrahydrofolate + H(+). The protein operates within one-carbon metabolism; tetrahydrofolate interconversion. Its function is as follows. Catalyzes the oxidation of 5,10-methylenetetrahydrofolate to 5,10-methenyltetrahydrofolate and then the hydrolysis of 5,10-methenyltetrahydrofolate to 10-formyltetrahydrofolate. The polypeptide is Bifunctional protein FolD (Kocuria rhizophila (strain ATCC 9341 / DSM 348 / NBRC 103217 / DC2201)).